A 274-amino-acid polypeptide reads, in one-letter code: Receptor-like protein 44 (274 aa).

A signal peptide spans 1–24 (MTRSHRLLLLLLLIFQTAQRLTTA). Residues 25 to 223 (DPNDEACLKN…PLQEMMMKSK (199 aa)) lie on the Extracellular side of the membrane. 3 N-linked (GlcNAc...) asparagine glycosylation sites follow: asparagine 48, asparagine 82, and asparagine 95. LRR repeat units lie at residues 96 to 121 (CTNL…QYLV), 123 to 144 (LAVL…LALC), 145 to 168 (AYLN…LGLL), and 169 to 192 (ARLS…LSNR). Residue asparagine 127 is glycosylated (N-linked (GlcNAc...) asparagine). Asparagine 191 and asparagine 200 each carry an N-linked (GlcNAc...) asparagine glycan. A helical transmembrane segment spans residues 224-244 (GLSVMAIVGIGLGSGIASLMI). Residues 245-274 (SFTGVCLWLRITEKKIVEEEGKISQSMPDY) are Cytoplasmic-facing.

It belongs to the RLP family.

It localises to the cell membrane. The protein is Receptor-like protein 44 of Arabidopsis thaliana (Mouse-ear cress).